The sequence spans 385 residues: UDP-N-acetylglucosamine--N-acetylmuramyl-(pentapeptide) pyrophosphoryl-undecaprenol N-acetylglucosamine transferase (385 aa).

Residues 11 to 13, asparagine 117, arginine 160, serine 215, and glutamine 317 each bind UDP-N-acetyl-alpha-D-glucosamine; that span reads TGG.

The protein belongs to the glycosyltransferase 28 family. MurG subfamily.

It localises to the cell inner membrane. The enzyme catalyses di-trans,octa-cis-undecaprenyl diphospho-N-acetyl-alpha-D-muramoyl-L-alanyl-D-glutamyl-meso-2,6-diaminopimeloyl-D-alanyl-D-alanine + UDP-N-acetyl-alpha-D-glucosamine = di-trans,octa-cis-undecaprenyl diphospho-[N-acetyl-alpha-D-glucosaminyl-(1-&gt;4)]-N-acetyl-alpha-D-muramoyl-L-alanyl-D-glutamyl-meso-2,6-diaminopimeloyl-D-alanyl-D-alanine + UDP + H(+). It participates in cell wall biogenesis; peptidoglycan biosynthesis. In terms of biological role, cell wall formation. Catalyzes the transfer of a GlcNAc subunit on undecaprenyl-pyrophosphoryl-MurNAc-pentapeptide (lipid intermediate I) to form undecaprenyl-pyrophosphoryl-MurNAc-(pentapeptide)GlcNAc (lipid intermediate II). This Rickettsia prowazekii (strain Madrid E) protein is UDP-N-acetylglucosamine--N-acetylmuramyl-(pentapeptide) pyrophosphoryl-undecaprenol N-acetylglucosamine transferase.